Here is a 152-residue protein sequence, read N- to C-terminus: Deoxyuridine 5'-triphosphate nucleotidohydrolase (152 aa).

Substrate-binding positions include 71–73 (RSG), N84, 88–90 (LID), and M98.

This sequence belongs to the dUTPase family. Mg(2+) serves as cofactor.

It carries out the reaction dUTP + H2O = dUMP + diphosphate + H(+). Its pathway is pyrimidine metabolism; dUMP biosynthesis; dUMP from dCTP (dUTP route): step 2/2. In terms of biological role, this enzyme is involved in nucleotide metabolism: it produces dUMP, the immediate precursor of thymidine nucleotides and it decreases the intracellular concentration of dUTP so that uracil cannot be incorporated into DNA. This chain is Deoxyuridine 5'-triphosphate nucleotidohydrolase, found in Shewanella sp. (strain ANA-3).